Reading from the N-terminus, the 283-residue chain is Protein FAM78A (283 aa).

This sequence belongs to the FAM78 family.

The sequence is that of Protein FAM78A (Fam78a) from Mus musculus (Mouse).